The chain runs to 106 residues: Terpredoxin (106 aa).

The region spanning 2 to 106 (PRVVFIDEQS…GLIVRVPLPA (105 aa)) is the 2Fe-2S ferredoxin-type domain. 4 residues coordinate [2Fe-2S] cluster: cysteine 40, cysteine 46, cysteine 49, and cysteine 87.

This sequence belongs to the adrenodoxin/putidaredoxin family. It depends on [2Fe-2S] cluster as a cofactor.

The oxidation of alpha-terpineol by cytochrome p450-TERP requires the participation of a flavoprotein, terpredoxin reductase, and an iron-sulfur protein, terpredoxin, to mediate the transfer of electrons from NADH to P450 for oxygen activation. This Pseudomonas sp protein is Terpredoxin (terPB).